Consider the following 366-residue polypeptide: Histidinol-phosphate aminotransferase (366 aa).

At Lys226 the chain carries N6-(pyridoxal phosphate)lysine.

It belongs to the class-II pyridoxal-phosphate-dependent aminotransferase family. Histidinol-phosphate aminotransferase subfamily. Pyridoxal 5'-phosphate serves as cofactor.

It carries out the reaction L-histidinol phosphate + 2-oxoglutarate = 3-(imidazol-4-yl)-2-oxopropyl phosphate + L-glutamate. Its pathway is amino-acid biosynthesis; L-histidine biosynthesis; L-histidine from 5-phospho-alpha-D-ribose 1-diphosphate: step 7/9. This Methanosarcina barkeri (strain Fusaro / DSM 804) protein is Histidinol-phosphate aminotransferase.